Here is an 805-residue protein sequence, read N- to C-terminus: Angiotensin-converting enzyme 2 (805 aa).

The first 17 residues, 1–17, serve as a signal peptide directing secretion; that stretch reads MSSSSWLLLSLVAVTTA. Residues 18-740 lie on the Extracellular side of the membrane; it reads QSLTEENAKT…LEPPYQPPVT (723 aa). Positions 19–607 constitute a Peptidase M2 domain; the sequence is SLTEENAKTF…QNRNSFVGWN (589 aa). N-linked (GlcNAc...) asparagine glycosylation occurs at Asn53. Cys133 and Cys141 form a disulfide bridge. Arg169 is a binding site for chloride. Substrate contacts are provided by residues Arg273 and 345–346; that span reads HP. A disulfide bridge links Cys344 with Cys361. Position 374 (His374) interacts with Zn(2+). The Proton acceptor role is filled by Glu375. Zn(2+) is bound by residues His378 and Glu402. The chloride site is built by Trp477 and Lys481. The active-site Proton donor is His505. Tyr515 is a binding site for substrate. A disulfide bond links Cys530 and Cys542. N-linked (GlcNAc...) asparagine glycosylation is found at Asn536 and Asn546. One can recognise a Collectrin-like domain in the interval 614–805; sequence ADQSIKVRIS…QNSDDAQTSF (192 aa). Positions 652-659 are essential for cleavage by ADAM17; sequence RKYFSIIK. N-linked (GlcNAc...) asparagine glycans are attached at residues Asn660 and Asn690. Residues 697–716 form an essential for cleavage by TMPRSS11D and TMPRSS2 region; it reads RSEVEDAIRMSRGRINDVFG. A helical membrane pass occupies residues 741–761; that stretch reads IWLIIFGVVMALVVVGIIILI. Residues 762-805 lie on the Cytoplasmic side of the membrane; it reads VTGIKGRKKKNETKREENPYDSMDIGKGESNAGFQNSDDAQTSF. Positions 771–805 are disordered; that stretch reads KNETKREENPYDSMDIGKGESNAGFQNSDDAQTSF. The LIR motif lies at 778-786; the sequence is ENPYDSMDI. Residue Tyr781 is modified to Phosphotyrosine. The Endocytic sorting signal motif lies at 781 to 784; that stretch reads YDSM. Positions 781–785 match the SH2-binding motif; the sequence is YDSMD. The residue at position 783 (Ser783) is a Phosphoserine. Lys788 participates in a covalent cross-link: Glycyl lysine isopeptide (Lys-Gly) (interchain with G-Cter in ubiquitin). The PTB signature appears at 792–795; the sequence is NAGF. Polar residues predominate over residues 793–805; that stretch reads AGFQNSDDAQTSF. Residues 803–805 carry the PDZ-binding motif; that stretch reads TSF.

The protein belongs to the peptidase M2 family. Homodimer. Interacts with the catalytically active form of TMPRSS2. Interacts with SLC6A19; this interaction is essential for expression and function of SLC6A19 in intestine. Interacts with ITGA5:ITGB1. Probably interacts (via endocytic sorting signal motif) with AP2M1; the interaction is inhibited by phosphorylation of Tyr-781. Interacts (via PDZ-binding motif) with NHERF1 (via PDZ domains); the interaction may enhance ACE2 membrane residence. In terms of assembly, (Microbial infection) Weakly interacts with SARS-CoV S protein. The cofactor is Zn(2+). Requires chloride as cofactor. Post-translationally, proteolytic cleavage by ADAM17 generates a secreted form. Also cleaved by serine proteases: TMPRSS2, TMPRSS11D and HPN/TMPRSS1. Phosphorylated. Phosphorylation at Tyr-781 probably inhibits interaction with AP2M1 and enables interactions with proteins containing SH2 domains. In terms of processing, ubiquitinated. Ubiquitinated on Lys-788 via 'Lys-48'-linked ubiquitin. 'Lys-48'-linked deubiquitinated by USP50 on the Lys-788; leading to its stabilization. Expressed in heart, kidney and forebrain (at protein level). Expressed in the small intestine, with expression in the intestinal brush border (at protein level). Ubiquitously expressed, with highest levels in ileum, kidney and lung. In lung, expressed on vascular endothelial and airway epithelial cells. Also expressed at high levels in lung secretory club and goblet cells as well as in alveolar type 2 cells.

The protein resides in the secreted. Its subcellular location is the cell membrane. It localises to the cytoplasm. It is found in the cell projection. The protein localises to the cilium. The protein resides in the apical cell membrane. It catalyses the reaction angiotensin II + H2O = angiotensin-(1-7) + L-phenylalanine. The enzyme catalyses angiotensin I + H2O = angiotensin-(1-9) + L-leucine. The catalysed reaction is bradykinin(1-8) + H2O = bradykinin(1-7) + L-phenylalanine. It carries out the reaction neurotensin + H2O = neurotensin-(1-12) + L-leucine. It catalyses the reaction kinetensin + H2O = kinetensin-(1-8) + L-leucine. The enzyme catalyses dynorphin A-(1-13) + H2O = dynorphin A-(1-12) + L-lysine. The catalysed reaction is apelin-13 + H2O = apelin-12 + L-phenylalanine. It carries out the reaction [Pyr1]apelin-13 + H2O = [Pyr1]apelin-12 + L-phenylalanine. It catalyses the reaction apelin-17 + H2O = apelin-16 + L-phenylalanine. Functionally, essential counter-regulatory carboxypeptidase of the renin-angiotensin hormone system that is a critical regulator of blood volume, systemic vascular resistance, and thus cardiovascular homeostasis. Converts angiotensin I to angiotensin 1-9, a nine-amino acid peptide with anti-hypertrophic effects in cardiomyocytes, and angiotensin II to angiotensin 1-7, which then acts as a beneficial vasodilator and anti-proliferation agent, counterbalancing the actions of the vasoconstrictor angiotensin II. Also removes the C-terminal residue from three other vasoactive peptides, neurotensin, kinetensin, and des-Arg bradykinin, but is not active on bradykinin. Also cleaves other biological peptides, such as apelins, casomorphins and dynorphin A. By cleavage of angiotensin II, may be an important regulator of heart function. By cleavage of angiotensin II, may also have a protective role in acute lung injury. Plays an important role in amino acid transport by acting as binding partner of amino acid transporter SLC6A19, regulating its trafficking on the cell surface and its activity. The chain is Angiotensin-converting enzyme 2 (Ace2) from Mus musculus (Mouse).